We begin with the raw amino-acid sequence, 250 residues long: 7-carboxy-7-deazaguanine synthase (250 aa).

Substrate-binding positions include Val15 to Gly17 and Arg30. The region spanning Leu21–Leu250 is the Radical SAM core domain. 3 residues coordinate [4Fe-4S] cluster: Cys34, Cys38, and Cys41. Thr43 serves as a coordination point for Mg(2+). Thr96 provides a ligand contact to substrate. Gly98 is a binding site for S-adenosyl-L-methionine.

This sequence belongs to the radical SAM superfamily. 7-carboxy-7-deazaguanine synthase family. As to quaternary structure, homodimer. It depends on [4Fe-4S] cluster as a cofactor. S-adenosyl-L-methionine serves as cofactor. Mg(2+) is required as a cofactor.

The enzyme catalyses 6-carboxy-5,6,7,8-tetrahydropterin + H(+) = 7-carboxy-7-deazaguanine + NH4(+). It functions in the pathway purine metabolism; 7-cyano-7-deazaguanine biosynthesis. Its function is as follows. Catalyzes the complex heterocyclic radical-mediated conversion of 6-carboxy-5,6,7,8-tetrahydropterin (CPH4) to 7-carboxy-7-deazaguanine (CDG), a step common to the biosynthetic pathways of all 7-deazapurine-containing compounds. This Geobacter sulfurreducens (strain ATCC 51573 / DSM 12127 / PCA) protein is 7-carboxy-7-deazaguanine synthase.